The following is a 198-amino-acid chain: Penicillin-binding protein activator LpoB (198 aa).

Residues 1 to 19 (MIRSVNRTGALMMALILSG) form the signal peptide. Cys-20 is lipidated: N-palmitoyl cysteine. Cys-20 carries the S-diacylglycerol cysteine lipid modification. Residues 26–37 (QPAPVEPTQPVE) are compositionally biased toward low complexity. The segment at 26–59 (QPAPVEPTQPVEPVQPVPQPEQPIPQPQPVPQPP) is disordered. Positions 38-59 (PVQPVPQPEQPIPQPQPVPQPP) are enriched in pro residues.

Belongs to the LpoB family. Interacts with PBP1b.

It is found in the cell outer membrane. In terms of biological role, regulator of peptidoglycan synthesis that is essential for the function of penicillin-binding protein 1B (PBP1b). In Pantoea ananatis (strain LMG 20103), this protein is Penicillin-binding protein activator LpoB.